The following is a 234-amino-acid chain: GTP:AMP phosphotransferase, mitochondrial (234 aa).

Residue 24-29 (GSGKGT) coordinates GTP. The tract at residues 45–74 (SSGDILRQEIKSESTLGREATTYIAQGKLL) is NMP. AMP contacts are provided by residues Ser-46, Arg-51, 72-74 (KLL), 103-106 (GFPR), and Gln-110. Positions 144–181 (NRYVHVPSGRVYNLQYNPPKVPGLDDITGEPLTKRLDD) are LID. GTP contacts are provided by residues Arg-145 and 154–155 (VY). AMP is bound by residues Arg-178 and Arg-189. Position 218 (Ser-218) interacts with GTP.

The protein belongs to the adenylate kinase family. AK3 subfamily. Monomer.

It localises to the mitochondrion matrix. It carries out the reaction a ribonucleoside 5'-triphosphate + AMP = a ribonucleoside 5'-diphosphate + ADP. In terms of biological role, involved in maintaining the homeostasis of cellular nucleotides by catalyzing the interconversion of nucleoside phosphates. Has GTP:AMP phosphotransferase and ITP:AMP phosphotransferase activities. Does not accept ATP as phosphate donor. The polypeptide is GTP:AMP phosphotransferase, mitochondrial (Saccharomyces cerevisiae (Baker's yeast)).